The primary structure comprises 684 residues: Threonine--tRNA ligase (684 aa).

One can recognise a TGS domain in the interval 1–66; that stretch reads MTVPATDSCP…DTDAEVVPVA (66 aa). The tract at residues 261–567 is catalytic; it reads DHRKLGSELD…LTEHYAGAFP (307 aa). 3 residues coordinate Zn(2+): Cys366, His417, and His544.

The protein belongs to the class-II aminoacyl-tRNA synthetase family. In terms of assembly, homodimer. Zn(2+) is required as a cofactor.

It is found in the cytoplasm. The catalysed reaction is tRNA(Thr) + L-threonine + ATP = L-threonyl-tRNA(Thr) + AMP + diphosphate + H(+). In terms of biological role, catalyzes the attachment of threonine to tRNA(Thr) in a two-step reaction: L-threonine is first activated by ATP to form Thr-AMP and then transferred to the acceptor end of tRNA(Thr). Also edits incorrectly charged L-seryl-tRNA(Thr). The protein is Threonine--tRNA ligase of Mycolicibacterium paratuberculosis (strain ATCC BAA-968 / K-10) (Mycobacterium paratuberculosis).